A 1142-amino-acid polypeptide reads, in one-letter code: MLVLRCRLGTSFPKLDNLVPKGKMKILLVFLGLLGNSVAMPMHMPRMPGFSSKSEEMMRYNQFNFMNGPHMAHLGPFFGNGLPQQFPQYQMPMWPQPPPNTWHPRKSSAPKRHNKTDQTQETQKPNQTQSKKPPQKRPLKQPSHNQPQPEEEAQPPQAFPPFGNGLFPYQQPPWQIPQRLPPPGYGRPPISNEEGGNPYFGYFGYHGFGGRPPYYSEEMFEQDFEKPKEEDPPKAESPGTEPTANSTVTETNSTQPNPKGSQGGNDTSPTGNSTPGLNTGNNPPAQNGIGPLPAVNASGQGGPGSQIPWRPSQPNIRENHPYPNIRNFPSGRQWYFTGTVMGHRQNRPFYRNQQVQRGPRWNFFAWERKQVARPGNPVYHKAYPPTSRGNYPNYAGNPANLRRKPQGPNKHPVGTTVAPLGPKPGPVVRNEKIQNPKEKPLGPKEQIIVPTKNPTSPWRNSQQYEVNKSNYKLPHSEGYMPVPNFNSVDQHENSYYPRGDSRKVPNSDGQTQSQNLPKGIVLGSRRMPYESETNQSELKHSSYQPAVYPEEIPSPAKEHFPAGRNTWDHQEISPPFKEDPGRQEEHLPHPSHGSRGSVFYPEYNPYDPRENSPYLRGNTWDERDDSPNTMGQKESPLYPINTPDQKEIVPYNEEDPVDPTGDEVFPGQNRWGEELSFKGGPTVRHYEGEQYTSNQPKEYLPYSLDNPSKPREDFYYSEFYPWSPDENFPSYNTASTMPPPIESRGYYVNNAAGPEESTLFPSRNSWDHRIQAQGQRERRPYFNRNIWDQATHLQKAPARPPDQKGNQPYYSNTPAGLQKNPIWHEGENLNYGMQITRMNSPEREHSSFPNFIPPSYPSGQKEAHLFHLSQRGSCCAGSSTGPKDNPLALQDYTPSYGLAPGENQDTSPLYTDGSHTKQTRDIISPTSILPGQRNSSEKRESQNPFRDDVSTLRRNTPCSIKNQLGQKEIMPFPEASSLQSKNTPCLKNDLGGDGNNILEQVFEDNQLNERTVDLTPEQLVIGTPDEGSNPEGIQSQVQENESERQQQRPSNILHLPCFGSKLAKHHSSTTGTPSSDGRQSPFDGDSITPTENPNTLVELATEEQFKSINVDPLDADEHSPFEFLQRGTNVQDQVQDCLLLQA.

Residues 1 to 39 (MLVLRCRLGTSFPKLDNLVPKGKMKILLVFLGLLGNSVA) form the signal peptide. Disordered regions lie at residues 88-193 (QYQM…ISNE), 214-326 (YYSE…PNIR), 398-671 (PANL…QNRW), 874-955 (CCAG…LRRN), 1020-1048 (VIGTPDEGSNPEGIQSQVQENESERQQQR), and 1062-1092 (LAKHHSSTTGTPSSDGRQSPFDGDSITPTEN). Basic residues predominate over residues 103 to 114 (HPRKSSAPKRHN). N114 and N126 each carry an N-linked (GlcNAc...) asparagine glycan. A compositionally biased stretch (polar residues) spans 117–128 (DQTQETQKPNQT). Residues 140 to 162 (KQPSHNQPQPEEEAQPPQAFPPF) are compositionally biased toward low complexity. Residues 170–186 (QQPPWQIPQRLPPPGYG) show a composition bias toward pro residues. 2 positions are modified to phosphoserine: S191 and S216. The segment covering 223 to 234 (DFEKPKEEDPPK) has biased composition (basic and acidic residues). Polar residues predominate over residues 240-285 (TEPTANSTVTETNSTQPNPKGSQGGNDTSPTGNSTPGLNTGNNPPA). 4 N-linked (GlcNAc...) asparagine glycosylation sites follow: N245, N252, N265, and N296. Residues 429–442 (RNEKIQNPKEKPLG) show a composition bias toward basic and acidic residues. Polar residues-rich tracts occupy residues 452-470 (KNPTSPWRNSQQYEVNKSN), 507-516 (SDGQTQSQNL), and 531-544 (SETNQSELKHSSYQ). An N-linked (GlcNAc...) asparagine glycan is attached at N467. N534 carries an N-linked (GlcNAc...) asparagine glycan. The segment covering 556–588 (AKEHFPAGRNTWDHQEISPPFKEDPGRQEEHLP) has biased composition (basic and acidic residues). The span at 652 to 661 (NEEDPVDPTG) shows a compositional bias: acidic residues. Residues 924–934 (SPTSILPGQRN) are compositionally biased toward polar residues. N934 carries N-linked (GlcNAc...) asparagine glycosylation. Residues 935–951 (SSEKRESQNPFRDDVST) show a composition bias toward basic and acidic residues. The N-linked (GlcNAc...) asparagine glycan is linked to N1040. A compositionally biased stretch (polar residues) spans 1068-1078 (STTGTPSSDGR).

Post-translationally, phosphorylated by FAM20C in vitro. As to expression, expressed in tooth particularly in odontoblast, ameloblast and cementoblast.

It localises to the secreted. Its subcellular location is the extracellular space. The protein resides in the extracellular matrix. Its function is as follows. Involved in the mineralization and structural organization of enamel. Involved in the extension of enamel during the secretory stage of dental enamel formation. This is Enamelin (ENAM) from Homo sapiens (Human).